Reading from the N-terminus, the 533-residue chain is Di/tripeptide-binding protein 3 (533 aa).

Residues 1–24 form the signal peptide; that stretch reads MRKILPLRAWLAAGLILGSPFSHA.

This sequence belongs to the bacterial solute-binding protein 5 family. In terms of assembly, the complex is composed of two ATP-binding proteins (DppD and DppF), two transmembrane proteins (DppB and DppC) and a solute-binding protein (DppA3). Five orthologous SBPs (DppA1-A5) are present in P.aeruginosa, which increases the substrate specificity of the DppBCDF transporter.

Part of the ABC transporter DppABCDF involved in the uptake of various di/tripeptides. Prefers dipeptides with acidic residues at the C-terminal end. Involved in the uptake of phaseolotoxin, a toxic tripeptide inhibiting the enzyme ornithine carbamoyltransferase. This Pseudomonas aeruginosa (strain UCBPP-PA14) protein is Di/tripeptide-binding protein 3.